Consider the following 117-residue polypeptide: Immunoglobulin kappa variable 1-5 (117 aa).

The first 22 residues, 1–22 (MDMRVPAQLLGLLLLWLPGAKC), serve as a signal peptide directing secretion. Residues 23-45 (DIQMTQSPSTLSASVGDRVTITC) form a framework-1 region. The 94-residue stretch at 24 to 117 (IQMTQSPSTL…YYCQQYNSYS (94 aa)) folds into the Ig-like domain. C45 and C110 are disulfide-bonded. The tract at residues 46–56 (RASQSISSWLA) is complementarity-determining-1. The interval 57–71 (WYQQKPGKAPKLLIY) is framework-2. Positions 72 to 78 (KASSLES) are complementarity-determining-2. The framework-3 stretch occupies residues 79–110 (GVPSRFSGSGSGTEFTLTISSLQPDDFATYYC). A complementarity-determining-3 region spans residues 111–117 (QQYNSYS).

In terms of assembly, immunoglobulins are composed of two identical heavy chains and two identical light chains; disulfide-linked.

Its subcellular location is the secreted. The protein localises to the cell membrane. Functionally, v region of the variable domain of immunoglobulin light chains that participates in the antigen recognition. Immunoglobulins, also known as antibodies, are membrane-bound or secreted glycoproteins produced by B lymphocytes. In the recognition phase of humoral immunity, the membrane-bound immunoglobulins serve as receptors which, upon binding of a specific antigen, trigger the clonal expansion and differentiation of B lymphocytes into immunoglobulins-secreting plasma cells. Secreted immunoglobulins mediate the effector phase of humoral immunity, which results in the elimination of bound antigens. The antigen binding site is formed by the variable domain of one heavy chain, together with that of its associated light chain. Thus, each immunoglobulin has two antigen binding sites with remarkable affinity for a particular antigen. The variable domains are assembled by a process called V-(D)-J rearrangement and can then be subjected to somatic hypermutations which, after exposure to antigen and selection, allow affinity maturation for a particular antigen. This Homo sapiens (Human) protein is Immunoglobulin kappa variable 1-5.